A 403-amino-acid chain; its full sequence is Eukaryotic initiation factor 4A (403 aa).

Residues 1 to 20 are disordered; it reads MDDRNEIPQDGPASMEPEGV. The short motif at 30 to 58 is the Q motif element; it reads DNFDDMNLREELLRGIYGYGFEKPSAIQQ. A Helicase ATP-binding domain is found at 61-231; that stretch reads IIPCVRGRDV…RCFMRDPVSI (171 aa). 74–81 provides a ligand contact to ATP; sequence AQSGTGKT. A DEAD box motif is present at residues 179 to 182; it reads DEAD. Positions 242-403 constitute a Helicase C-terminal domain; sequence GIKQFYVNVK…EMPANIADLI (162 aa).

The protein belongs to the DEAD box helicase family. eIF4A subfamily. EIF4F is a multi-subunit complex, the composition of which varies with external and internal environmental conditions. It is composed of at least eIF4A, eIF4E1 and eIF4G1. Interacts with tud and vas. Interacts (via multiple contacts) with bam; the interaction is direct.

Its subcellular location is the cytoplasm. It is found in the cytoplasmic ribonucleoprotein granule. It catalyses the reaction ATP + H2O = ADP + phosphate + H(+). ATP-dependent RNA helicase which is a subunit of the eIF4F complex involved in cap recognition and is required for mRNA binding to ribosome. In the current model of translation initiation, eIF4A unwinds RNA secondary structures in the 5'-UTR of mRNAs which is necessary to allow efficient binding of the small ribosomal subunit, and subsequent scanning for the initiator codon. As a result, promotes cell proliferation and growth. Binds and antagonises the bam-bgcn complex; probably prevents bam mediated translational repression of shg/E-cadherin. Involved in germ cell formation. Involved in germline stem cell maintenance and proliferation; prevents differentiation. The protein is Eukaryotic initiation factor 4A of Drosophila melanogaster (Fruit fly).